Consider the following 185-residue polypeptide: Inner membrane-spanning protein YciB (185 aa).

The next 5 membrane-spanning stretches (helical) occupy residues isoleucine 27–valine 47, isoleucine 53–tyrosine 73, tryptophan 76–phenylalanine 96, threonine 118–serine 138, and phenylalanine 149–isoleucine 169.

The protein belongs to the YciB family.

The protein resides in the cell inner membrane. Plays a role in cell envelope biogenesis, maintenance of cell envelope integrity and membrane homeostasis. The protein is Inner membrane-spanning protein YciB of Haemophilus influenzae (strain 86-028NP).